Reading from the N-terminus, the 146-residue chain is Putative pre-16S rRNA nuclease (146 aa).

Belongs to the YqgF nuclease family.

The protein resides in the cytoplasm. Its function is as follows. Could be a nuclease involved in processing of the 5'-end of pre-16S rRNA. The chain is Putative pre-16S rRNA nuclease from Paraburkholderia xenovorans (strain LB400).